A 613-amino-acid chain; its full sequence is MITKVSGFLFRTFREDPATTESRGYGFLLRAGYIRQTGSGIFSWMPLGLKVRHKIENIIRYEMGQVNAIEVLFPALFSADLFKQSGRWSEYGDDIFRLKDRRQGDYLLAPTHEEAFTQMMKEICTSYRDLPRTVYQIQDKYRDELRPRAGLLRSREFSMKDAYSFDLDEKGLRQSYEAQKRAYKKIFDRLKIDYVIVKANAGAMGGSVSEEFLHPTEMGDDTFVVTADGSAFNAEVYVTPPGPAIDYSNAPEAEDCETPGVISIPDLVNHMNSSGRFIGRVIESSDCLKCLLFRIEYAEVQNGNPSNLVVKKILERGFEYIGFLVPGDRNVDLKRAQVALSPLTIEPADNRVFECNPSFVRGSIGPGLSGVFYCADPRVSLGSSWIIGANRPGVHRIGAIAGRDFSFDCTLDVSSIKTGDKSEWGPVTVKRGIEIGHLFQLGLKYSNALGLKVLDKDGYNKAVFMGSYGIGVSRLFALIAEKNCDERGLKWPAVLAPFDLHVVLLSSARAELIDSLTDCGLDVLVDDRRVSPGVKFTDAQLIGVPKIIVIGDKTRGEDVEVWDRANDQRTVLPLKEMIQGVIQGVIQGVIQGVIQGGDTGGDTGGDTGGCTER.

It belongs to the class-II aminoacyl-tRNA synthetase family. ProS type 1 subfamily. As to quaternary structure, homodimer.

It is found in the cytoplasm. It carries out the reaction tRNA(Pro) + L-proline + ATP = L-prolyl-tRNA(Pro) + AMP + diphosphate. In terms of biological role, catalyzes the attachment of proline to tRNA(Pro) in a two-step reaction: proline is first activated by ATP to form Pro-AMP and then transferred to the acceptor end of tRNA(Pro). As ProRS can inadvertently accommodate and process non-cognate amino acids such as alanine and cysteine, to avoid such errors it has two additional distinct editing activities against alanine. One activity is designated as 'pretransfer' editing and involves the tRNA(Pro)-independent hydrolysis of activated Ala-AMP. The other activity is designated 'posttransfer' editing and involves deacylation of mischarged Ala-tRNA(Pro). The misacylated Cys-tRNA(Pro) is not edited by ProRS. The chain is Proline--tRNA ligase from Tropheryma whipplei (strain Twist) (Whipple's bacillus).